Consider the following 135-residue polypeptide: P2Y purinoceptor 4 (135 aa).

Residues 1 to 25 form a helical membrane-spanning segment; it reads VHFSSSVMVLLFGLPFLVTLVCYGL. Residues 26–49 lie on the Cytoplasmic side of the membrane; the sequence is MALRLCRPLPGAGQSSSRLRSLRT. The helical transmembrane segment at 50–72 threads the bilayer; it reads IAVVMTVFAVCLVPFHITRTIYY. The Extracellular portion of the chain corresponds to 73–90; that stretch reads LARLLKADCQILNIVNVV. A helical transmembrane segment spans residues 91–112; that stretch reads YKVTRPLASANSCLDPLLYLFT. The Cytoplasmic portion of the chain corresponds to 113–135; it reads GDKYRHQLQRLCRVSAPQRRITA.

The protein belongs to the G-protein coupled receptor 1 family. As to expression, expressed in brain, heart, stria vascularis and vestibular labyrinth.

It localises to the cell membrane. In terms of biological role, receptor for ATP and UTP coupled to G-proteins that activate a phosphatidylinositol-calcium second messenger system. Not activated by UDP. In Meriones unguiculatus (Mongolian jird), this protein is P2Y purinoceptor 4 (P2RY4).